We begin with the raw amino-acid sequence, 338 residues long: Cytochrome c biogenesis protein CcsA (338 aa).

8 helical membrane-spanning segments follow: residues 11 to 31 (VLLD…YWLA), 39 to 59 (LLHE…TGLL), 76 to 96 (ESLF…EAFA), 100 to 120 (LVGV…SLTL), 145 to 165 (VMIL…AFLI), 244 to 264 (LIGL…VWAN), 278 to 295 (TWSL…HARI), and 305 to 325 (ATLA…VNFL).

Belongs to the CcmF/CycK/Ccl1/NrfE/CcsA family. May interact with ccs1.

The protein localises to the cell inner membrane. Its function is as follows. Required during biogenesis of c-type cytochromes (cytochrome c6 and cytochrome f) at the step of heme attachment. This Gloeobacter violaceus (strain ATCC 29082 / PCC 7421) protein is Cytochrome c biogenesis protein CcsA.